A 398-amino-acid polypeptide reads, in one-letter code: Probable sugar efflux transporter (398 aa).

12 consecutive transmembrane segments (helical) span residues 15 to 35, 50 to 70, 81 to 101, 103 to 123, 136 to 156, 169 to 189, 209 to 229, 246 to 266, 275 to 295, 301 to 321, 333 to 353, and 364 to 384; these read VVTL…PVGL, VGIM…PFML, LIGL…AWNF, VLVI…SITA, AQAL…GLPI, TFFA…KLLP, PALM…YTAY, FATV…VLFG, LLVS…MPAA, LAIL…GMQV, VAMS…ALVG, and AIGY…ILIF.

This sequence belongs to the major facilitator superfamily. SotB (TC 2.A.1.2) family.

It is found in the cell inner membrane. Its function is as follows. Involved in the efflux of sugars. The physiological role may be the reduction of the intracellular concentration of toxic sugars or sugar metabolites. In Enterobacter sp. (strain 638), this protein is Probable sugar efflux transporter.